The sequence spans 110 residues: PTS system oligo-beta-mannoside-specific EIIA component (110 aa).

The PTS EIIA type-3 domain maps to 9 to 107; sequence LTDEQISFQL…VKEMLDLFKT (99 aa). Residue H83 is the Tele-phosphohistidine intermediate of the active site. H83 is modified (phosphohistidine; by HPr).

The protein resides in the cytoplasm. The phosphoenolpyruvate-dependent sugar phosphotransferase system (sugar PTS), a major carbohydrate active transport system, catalyzes the phosphorylation of incoming sugar substrates concomitantly with their translocation across the cell membrane. The enzyme II GmuABC PTS system is involved in the transport of oligo-glucomannans such as cellobiose or mannobiose. This Bacillus subtilis (strain 168) protein is PTS system oligo-beta-mannoside-specific EIIA component.